A 144-amino-acid polypeptide reads, in one-letter code: Large ribosomal subunit protein uL15 (144 aa).

The tract at residues 1–49 (MKLNTLSPAAGAKSAAKRVGRGIGSGLGKTAGRGHKGQKSRSGGGVRVG) is disordered. The segment covering 21–31 (RGIGSGLGKTA) has biased composition (gly residues).

This sequence belongs to the universal ribosomal protein uL15 family. As to quaternary structure, part of the 50S ribosomal subunit.

Functionally, binds to the 23S rRNA. This chain is Large ribosomal subunit protein uL15, found in Shewanella loihica (strain ATCC BAA-1088 / PV-4).